Consider the following 222-residue polypeptide: Arginine ABC transporter permease protein ArtM (222 aa).

Over Met1–Ser15 the chain is Periplasmic. In terms of domain architecture, ABC transmembrane type-1 spans Leu12–Met208. Residues Leu16 to Ile36 traverse the membrane as a helical segment. Over Leu37 to Arg49 the chain is Cytoplasmic. The helical transmembrane segment at Gly50–Gly70 threads the bilayer. Residues Pro71 to Glu79 lie on the Periplasmic side of the membrane. The chain crosses the membrane as a helical span at residues Tyr80–Leu100. The Cytoplasmic portion of the chain corresponds to Asn101–Glu154. A helical transmembrane segment spans residues Val155–Gly175. Over Tyr176–Asp186 the chain is Periplasmic. Residues Val187–Met207 form a helical membrane-spanning segment. The Cytoplasmic segment spans residues Met208–Asn222.

It belongs to the binding-protein-dependent transport system permease family. HisMQ subfamily. In terms of assembly, the complex is composed of two ATP-binding proteins (ArtP), two transmembrane proteins (ArtM and ArtQ) and two solute-binding proteins (ArtJ and ArtI).

Its subcellular location is the cell inner membrane. Its function is as follows. Part of the ABC transporter complex ArtPIQMJ involved in arginine transport. Probably responsible for the translocation of the substrate across the membrane. This Escherichia coli (strain K12) protein is Arginine ABC transporter permease protein ArtM (artM).